A 170-amino-acid chain; its full sequence is NADH-quinone oxidoreductase subunit B (170 aa).

Residues C37, C38, C102, and C131 each contribute to the [4Fe-4S] cluster site.

This sequence belongs to the complex I 20 kDa subunit family. In terms of assembly, NDH-1 is composed of 14 different subunits. Subunits NuoB, C, D, E, F, and G constitute the peripheral sector of the complex. [4Fe-4S] cluster serves as cofactor.

It is found in the cell inner membrane. The enzyme catalyses a quinone + NADH + 5 H(+)(in) = a quinol + NAD(+) + 4 H(+)(out). Its function is as follows. NDH-1 shuttles electrons from NADH, via FMN and iron-sulfur (Fe-S) centers, to quinones in the respiratory chain. The immediate electron acceptor for the enzyme in this species is believed to be ubiquinone. Couples the redox reaction to proton translocation (for every two electrons transferred, four hydrogen ions are translocated across the cytoplasmic membrane), and thus conserves the redox energy in a proton gradient. The chain is NADH-quinone oxidoreductase subunit B from Geotalea uraniireducens (strain Rf4) (Geobacter uraniireducens).